The primary structure comprises 374 residues: Chaperone protein DnaJ (374 aa).

Positions 5-70 constitute a J domain; the sequence is DYYEVLGLEK…DKKANYDRFG (66 aa). Residues 137–219 form a CR-type zinc finger; sequence GVEKSINITR…CHGAGHVRKK (83 aa). Residues cysteine 150, cysteine 153, cysteine 167, cysteine 170, cysteine 193, cysteine 196, cysteine 207, and cysteine 210 each contribute to the Zn(2+) site. 4 CXXCXGXG motif repeats span residues 150–157, 167–174, 193–200, and 207–214; these read CETCGGTG, CDKCGGTG, CDKCGGRG, and CHECHGAG.

It belongs to the DnaJ family. As to quaternary structure, homodimer. It depends on Zn(2+) as a cofactor.

It localises to the cytoplasm. In terms of biological role, participates actively in the response to hyperosmotic and heat shock by preventing the aggregation of stress-denatured proteins and by disaggregating proteins, also in an autonomous, DnaK-independent fashion. Unfolded proteins bind initially to DnaJ; upon interaction with the DnaJ-bound protein, DnaK hydrolyzes its bound ATP, resulting in the formation of a stable complex. GrpE releases ADP from DnaK; ATP binding to DnaK triggers the release of the substrate protein, thus completing the reaction cycle. Several rounds of ATP-dependent interactions between DnaJ, DnaK and GrpE are required for fully efficient folding. Also involved, together with DnaK and GrpE, in the DNA replication of plasmids through activation of initiation proteins. This is Chaperone protein DnaJ from Clostridium acetobutylicum (strain ATCC 824 / DSM 792 / JCM 1419 / IAM 19013 / LMG 5710 / NBRC 13948 / NRRL B-527 / VKM B-1787 / 2291 / W).